The following is a 479-amino-acid chain: Anaerobic nitric oxide reductase flavorubredoxin (479 aa).

Residues 30 to 210 are zinc metallo-hydrolase; the sequence is LRGSSYNSYL…PFSRLVTPKI (181 aa). 6 residues coordinate Fe cation: His79, Glu81, Asp83, His147, Asp166, and His227. The 140-residue stretch at 254 to 393 folds into the Flavodoxin-like domain; the sequence is ITIFYDTMSN…LCREHGREIA (140 aa). Residues 260–264 and 342–369 each bind FMN; these read TMSNN and AFGS…EMSL. The Rubredoxin-like domain maps to 423–474; sequence GPRMQCSVCQWIYDPAKGEPMQDVAPGTPWSEVPDNFLCPECSLGKDVFEEL. Residues Cys428, Cys431, Cys461, and Cys464 each contribute to the Fe cation site.

In the N-terminal section; belongs to the zinc metallo-hydrolase group 3 family. In terms of assembly, homotetramer. The cofactor is Fe cation. FMN serves as cofactor.

It is found in the cytoplasm. Its pathway is nitrogen metabolism; nitric oxide reduction. Functionally, anaerobic nitric oxide reductase; uses NADH to detoxify nitric oxide (NO), protecting several 4Fe-4S NO-sensitive enzymes. Has at least 2 reductase partners, only one of which (NorW, flavorubredoxin reductase) has been identified. NO probably binds to the di-iron center; electrons enter from the NorW at rubredoxin and are transferred sequentially to the FMN center and the di-iron center. Also able to function as an aerobic oxygen reductase. In Shigella boydii serotype 4 (strain Sb227), this protein is Anaerobic nitric oxide reductase flavorubredoxin.